The chain runs to 261 residues: Indole-3-glycerol phosphate synthase (261 aa).

It belongs to the TrpC family.

The enzyme catalyses 1-(2-carboxyphenylamino)-1-deoxy-D-ribulose 5-phosphate + H(+) = (1S,2R)-1-C-(indol-3-yl)glycerol 3-phosphate + CO2 + H2O. It participates in amino-acid biosynthesis; L-tryptophan biosynthesis; L-tryptophan from chorismate: step 4/5. The chain is Indole-3-glycerol phosphate synthase from Burkholderia multivorans (strain ATCC 17616 / 249).